The following is a 426-amino-acid chain: Dihydroorotase (426 aa).

Residues H61 and H63 each contribute to the Zn(2+) site. Substrate contacts are provided by residues 63–65 and N95; that span reads HCR. E146, H180, H229, and D297 together coordinate Zn(2+). D297 is a catalytic residue. H301 is a binding site for substrate.

The protein belongs to the metallo-dependent hydrolases superfamily. DHOase family. Class I DHOase subfamily. The cofactor is Zn(2+).

It carries out the reaction (S)-dihydroorotate + H2O = N-carbamoyl-L-aspartate + H(+). It participates in pyrimidine metabolism; UMP biosynthesis via de novo pathway; (S)-dihydroorotate from bicarbonate: step 3/3. Catalyzes the reversible cyclization of carbamoyl aspartate to dihydroorotate. In Methanopyrus kandleri (strain AV19 / DSM 6324 / JCM 9639 / NBRC 100938), this protein is Dihydroorotase.